The primary structure comprises 468 residues: Asparagine--tRNA ligase (468 aa).

The protein belongs to the class-II aminoacyl-tRNA synthetase family. In terms of assembly, homodimer.

The protein resides in the cytoplasm. It carries out the reaction tRNA(Asn) + L-asparagine + ATP = L-asparaginyl-tRNA(Asn) + AMP + diphosphate + H(+). In Parabacteroides distasonis (strain ATCC 8503 / DSM 20701 / CIP 104284 / JCM 5825 / NCTC 11152), this protein is Asparagine--tRNA ligase.